Here is a 269-residue protein sequence, read N- to C-terminus: Tryptophan synthase alpha chain (269 aa).

Catalysis depends on proton acceptor residues Glu-41 and Asp-52.

It belongs to the TrpA family. Tetramer of two alpha and two beta chains.

It catalyses the reaction (1S,2R)-1-C-(indol-3-yl)glycerol 3-phosphate + L-serine = D-glyceraldehyde 3-phosphate + L-tryptophan + H2O. Its pathway is amino-acid biosynthesis; L-tryptophan biosynthesis; L-tryptophan from chorismate: step 5/5. In terms of biological role, the alpha subunit is responsible for the aldol cleavage of indoleglycerol phosphate to indole and glyceraldehyde 3-phosphate. This is Tryptophan synthase alpha chain from Geobacillus stearothermophilus (Bacillus stearothermophilus).